The sequence spans 5596 residues: Midasin (5596 aa).

The residue at position 1 (M1) is an N-acetylmethionine. AAA-ATPase protomer regions lie at residues 307-591 (SVCK…TSKL), 659-978 (LIEQ…ASNP), 1048-1316 (KEPT…QEEI), and 1362-1616 (HIVW…NKMG). 329 to 336 (GPIGCGKT) contacts ATP. The tract at residues 517 to 537 (SSVGCEQAPEEVSEARRENKR) is disordered. ATP-binding positions include 677 to 684 (GETGTGKT) and 1084 to 1091 (GETSVGKT). T1177 is modified (phosphothreonine). 1390 to 1397 (GDTGCGKT) contributes to the ATP binding site. K1683 bears the N6-acetyllysine mark. 2 AAA-ATPase protomer regions span residues 1738–1995 (RLLR…AVFK) and 2053–2313 (MKCV…IYIS). ATP contacts are provided by residues 1753–1760 (GSPGVGKT) and 2066–2073 (GPASVGKT). S1754 carries the post-translational modification Phosphoserine. Residues 2418–4691 (SLRAHETWGD…EGEGMKDVSD (2274 aa)) are linker. A disordered region spans residues 3989–4008 (LVESDKEEQPDFLPRPTDGA). T4212 carries the post-translational modification Phosphothreonine. A Phosphoserine modification is found at S4538. 2 disordered regions span residues 4669–4688 (ATEFHDYEGGGIGEGEGMKD) and 4700–5260 (EDTF…SRES). Positions 4702-4724 (TFQKGQEKDKEDPDSKSDIKGED) are enriched in basic and acidic residues. Over residues 4741–4757 (ELEEQEEDDEKSDSEGG) the composition is skewed to acidic residues. Residues S4752 and S4754 each carry the phosphoserine modification. The span at 4758-4780 (DLDKHMGDLNGEEADKLDERLWG) shows a compositional bias: basic and acidic residues. Residues 4781-4794 (DDDEEEDEEEEDNK) are compositionally biased toward acidic residues. Residues 4822 to 4834 (NKDKSQQDKKEEK) show a composition bias toward basic and acidic residues. Over residues 4835–4844 (EEAEADDGGQ) the composition is skewed to acidic residues. The span at 4845 to 4855 (GEDKINEQIDE) shows a compositional bias: basic and acidic residues. Positions 4877-4888 (EALDLPDDLNLD) are enriched in acidic residues. The residue at position 4889 (S4889) is a Phosphoserine. The span at 4896-4908 (EDTDNEEGEEENP) shows a compositional bias: acidic residues. T4898 carries the post-translational modification Phosphothreonine. Residues 4909–4928 (LEIKEKPEEAGHEAEERGET) show a composition bias toward basic and acidic residues. Phosphoserine occurs at positions 4937 and 4946. Positions 4940–4966 (EPEEGPSEDDKAEGEEEMDTGADDQDG) are enriched in acidic residues. The segment covering 4968–4989 (AAQHPEEHSEEQQQSVEEKDKE) has biased composition (basic and acidic residues). Residues 5007–5021 (QEEEEREDSDTEEQV) are compositionally biased toward acidic residues. At S5015 the chain carries Phosphoserine. Positions 5033–5046 (CGQTGVENMQNTQA) are enriched in polar residues. Positions 5054 to 5064 (PEKEQGKEEHG) are enriched in basic and acidic residues. Residues 5088–5101 (KHTRKNTQSFKRKP) show a composition bias toward basic residues. Over residues 5105–5115 (DNERSMGDHNE) the composition is skewed to basic and acidic residues. Residues 5132-5141 (QGPAQQPQAQ) are compositionally biased toward low complexity. Acidic residues predominate over residues 5181 to 5197 (QEEEEIEDTLMDTEEQE). 2 stretches are compositionally biased toward basic and acidic residues: residues 5198-5213 (EFKAADVEQLKPEEIK) and 5233-5260 (KTEEDQDPRTDKAHKETENEKPERSRES). The 200-residue stretch at 5384–5583 (QICLAIDDSS…ALPETLSDAL (200 aa)) folds into the VWFA domain.

Belongs to the midasin family. In terms of assembly, associates with pre-60S ribosomes in the nucleoplasm. Interacts (via its hexameric AAA ATPase ring) with the PELP1 complex (via PELP1); the interaction is regulated by SUMO conjugation of PELP1 and is crucial for recruitment of MDN1 to the pre-ribosomal particle. Interacts (via VWFA/MIDAS domain) with WDR12 (via UBL domain). Interacts (via VWFA/MIDAS domain) with NLE1 (via UBL domain).

It is found in the nucleus. The protein resides in the nucleolus. It localises to the nucleoplasm. The protein localises to the cytoplasm. Functionally, nuclear chaperone required for maturation and nuclear export of pre-60S ribosome subunits. Functions at successive maturation steps to remove ribosomal factors at critical transition points, first driving the exit of early pre-60S particles from the nucleolus and then driving late pre-60S particles from the nucleus. At an early stage in 60S maturation, mediates the dissociation of the PeBoW complex (PES1-BOP1-WDR12) from early pre-60S particles, rendering them competent for export from the nucleolus to the nucleoplasm. Subsequently recruited to the nucleoplasmic particles through interaction with SUMO-conjugated PELP1 complex. This binding is only possible if the 5S RNP at the central protuberance has undergone the rotation to complete its maturation. The protein is Midasin (MDN1) of Homo sapiens (Human).